An 88-amino-acid chain; its full sequence is MEQASFVVIDETGIHARPATLLVQAASKYSSDVQIEYTGKKVNLKSIMGVMSLGIGKGADITIYTEGSDEKEAIEGLTEVLKKEGLAE.

Positions 1 to 88 (MEQASFVVID…EVLKKEGLAE (88 aa)) constitute an HPr domain. H15 functions as the Pros-phosphohistidine intermediate in the catalytic mechanism. The residue at position 46 (S46) is a Phosphoserine; by HPrK/P.

This sequence belongs to the HPr family.

Its subcellular location is the cytoplasm. With respect to regulation, phosphorylation on Ser-46 inhibits the phosphoryl transfer from enzyme I to HPr. Functionally, general (non sugar-specific) component of the phosphoenolpyruvate-dependent sugar phosphotransferase system (sugar PTS). This major carbohydrate active-transport system catalyzes the phosphorylation of incoming sugar substrates concomitantly with their translocation across the cell membrane. The phosphoryl group from phosphoenolpyruvate (PEP) is transferred to the phosphoryl carrier protein HPr by enzyme I. Phospho-HPr then transfers it to the PTS EIIA domain. Its function is as follows. P-Ser-HPr interacts with the catabolite control protein A (CcpA), forming a complex that binds to DNA at the catabolite response elements cre, operator sites preceding a large number of catabolite-regulated genes. Thus, P-Ser-HPr is a corepressor in carbon catabolite repression (CCR), a mechanism that allows bacteria to coordinate and optimize the utilization of available carbon sources. P-Ser-HPr also plays a role in inducer exclusion, in which it probably interacts with several non-PTS permeases and inhibits their transport activity. The chain is Phosphocarrier protein HPr (ptsH) from Listeria monocytogenes serovar 1/2a (strain ATCC BAA-679 / EGD-e).